Here is a 312-residue protein sequence, read N- to C-terminus: HPr kinase/phosphorylase (312 aa).

Catalysis depends on residues His139 and Lys160. Residue 154–161 participates in ATP binding; sequence GDSGIGKS. Ser161 serves as a coordination point for Mg(2+). The active-site Proton acceptor; for phosphorylation activity. Proton donor; for dephosphorylation activity is the Asp178. An important for the catalytic mechanism of both phosphorylation and dephosphorylation region spans residues 202–211; it reads IEIRGVGIID. Glu203 is a binding site for Mg(2+). Arg244 is a catalytic residue. An important for the catalytic mechanism of dephosphorylation region spans residues 265-270; that stretch reads PVKTGR.

This sequence belongs to the HPrK/P family. In terms of assembly, homohexamer. Requires Mg(2+) as cofactor.

It catalyses the reaction [HPr protein]-L-serine + ATP = [HPr protein]-O-phospho-L-serine + ADP + H(+). The enzyme catalyses [HPr protein]-O-phospho-L-serine + phosphate + H(+) = [HPr protein]-L-serine + diphosphate. Its function is as follows. Catalyzes the ATP- as well as the pyrophosphate-dependent phosphorylation of a specific serine residue in HPr, a phosphocarrier protein of the phosphoenolpyruvate-dependent sugar phosphotransferase system (PTS). HprK/P also catalyzes the pyrophosphate-producing, inorganic phosphate-dependent dephosphorylation (phosphorolysis) of seryl-phosphorylated HPr (P-Ser-HPr). The two antagonistic activities of HprK/P are regulated by several intracellular metabolites, which change their concentration in response to the absence or presence of rapidly metabolisable carbon sources (glucose, fructose, etc.) in the growth medium. Therefore, by controlling the phosphorylation state of HPr, HPrK/P is a sensor enzyme that plays a major role in the regulation of carbon metabolism and sugar transport: it mediates carbon catabolite repression (CCR), and regulates PTS-catalyzed carbohydrate uptake and inducer exclusion. This is HPr kinase/phosphorylase from Streptococcus pneumoniae (strain ATCC BAA-255 / R6).